The primary structure comprises 200 residues: Endoribonuclease YbeY (200 aa).

Zn(2+) contacts are provided by His-120, His-124, and His-130.

This sequence belongs to the endoribonuclease YbeY family. Zn(2+) is required as a cofactor.

The protein resides in the cytoplasm. Functionally, single strand-specific metallo-endoribonuclease involved in late-stage 70S ribosome quality control and in maturation of the 3' terminus of the 16S rRNA. The polypeptide is Endoribonuclease YbeY (Corynebacterium efficiens (strain DSM 44549 / YS-314 / AJ 12310 / JCM 11189 / NBRC 100395)).